Reading from the N-terminus, the 99-residue chain is NADH-quinone oxidoreductase subunit K (99 aa).

A run of 3 helical transmembrane segments spans residues 3–23, 28–48, and 62–82; these read PMYY…GVLL, IIVF…LVTF, and FFVM…IVAI.

Belongs to the complex I subunit 4L family. In terms of assembly, NDH-1 is composed of 14 different subunits. Subunits NuoA, H, J, K, L, M, N constitute the membrane sector of the complex.

It localises to the cell membrane. It carries out the reaction a quinone + NADH + 5 H(+)(in) = a quinol + NAD(+) + 4 H(+)(out). In terms of biological role, NDH-1 shuttles electrons from NADH, via FMN and iron-sulfur (Fe-S) centers, to quinones in the respiratory chain. The immediate electron acceptor for the enzyme in this species is believed to be a menaquinone. Couples the redox reaction to proton translocation (for every two electrons transferred, four hydrogen ions are translocated across the cytoplasmic membrane), and thus conserves the redox energy in a proton gradient. The chain is NADH-quinone oxidoreductase subunit K from Acidothermus cellulolyticus (strain ATCC 43068 / DSM 8971 / 11B).